Consider the following 228-residue polypeptide: MKKKAVILLSGGPDSTTVLEIVSKTDYEIYALSFNYHRRNSLEVQKIQGLIKDYNVKQHRVINIDLQSFIGSALTDDNIDVPKFQNTDQLPSDIPVTYVPARNTIFLSYALGVAEVIGARDIFIGVHTNDYTNYPDCRPEYIKSFEAMANLATRVGVNGEKITIHAPLINMTKEQIIKKGLELGVDYSKTISCYDPTEDGLSCGQCLSCIARLDAFKKNNVQDPIKYV.

ATP is bound at residue 9–19 (LSGGPDSTTVL). Cysteine 193, cysteine 203, cysteine 206, and cysteine 209 together coordinate Zn(2+).

The protein belongs to the QueC family. The cofactor is Zn(2+).

It catalyses the reaction 7-carboxy-7-deazaguanine + NH4(+) + ATP = 7-cyano-7-deazaguanine + ADP + phosphate + H2O + H(+). The protein operates within purine metabolism; 7-cyano-7-deazaguanine biosynthesis. Catalyzes the ATP-dependent conversion of 7-carboxy-7-deazaguanine (CDG) to 7-cyano-7-deazaguanine (preQ(0)). This Rickettsia conorii (strain ATCC VR-613 / Malish 7) protein is 7-cyano-7-deazaguanine synthase.